A 314-amino-acid polypeptide reads, in one-letter code: Malate dehydrogenase (314 aa).

Residues Gly-7–Gly-12 and Asp-32 contribute to the NAD(+) site. Residues Arg-81 and Arg-87 each contribute to the substrate site. NAD(+) contacts are provided by residues Asn-94 and Val-117 to Asn-119. Substrate-binding residues include Asn-119 and Arg-150. The active-site Proton acceptor is the His-174.

This sequence belongs to the LDH/MDH superfamily. MDH type 3 family.

It catalyses the reaction (S)-malate + NAD(+) = oxaloacetate + NADH + H(+). Its function is as follows. Catalyzes the reversible oxidation of malate to oxaloacetate. In Salinibacter ruber (strain DSM 13855 / M31), this protein is Malate dehydrogenase.